A 311-amino-acid chain; its full sequence is Oxygen-dependent coproporphyrinogen-III oxidase (311 aa).

Serine 100 is a substrate binding site. 2 residues coordinate a divalent metal cation: histidine 104 and histidine 114. The Proton donor role is filled by histidine 114. 116–118 (NVR) is a binding site for substrate. Residues histidine 153 and histidine 183 each coordinate a divalent metal cation. The segment at 248–283 (YAEFNLVYDRGTLFGLQSGGRTESILMSLPPIVHWE) is important for dimerization. 266–268 (GGR) is a binding site for substrate.

This sequence belongs to the aerobic coproporphyrinogen-III oxidase family. Homodimer. Requires a divalent metal cation as cofactor.

Its subcellular location is the cytoplasm. It carries out the reaction coproporphyrinogen III + O2 + 2 H(+) = protoporphyrinogen IX + 2 CO2 + 2 H2O. Its pathway is porphyrin-containing compound metabolism; protoporphyrin-IX biosynthesis; protoporphyrinogen-IX from coproporphyrinogen-III (O2 route): step 1/1. Functionally, involved in the heme biosynthesis. Catalyzes the aerobic oxidative decarboxylation of propionate groups of rings A and B of coproporphyrinogen-III to yield the vinyl groups in protoporphyrinogen-IX. This is Oxygen-dependent coproporphyrinogen-III oxidase from Legionella pneumophila (strain Corby).